We begin with the raw amino-acid sequence, 66 residues long: Large ribosomal subunit protein bL35 (66 aa).

It belongs to the bacterial ribosomal protein bL35 family.

The sequence is that of Large ribosomal subunit protein bL35 from Acholeplasma laidlawii (strain PG-8A).